Consider the following 308-residue polypeptide: uncharacterized protein (308 aa).

A signal peptide spans 1–28 (MILMKKFEIILFLFIAVLIFVFGYFVGA).

This is an uncharacterized protein from Methanocaldococcus jannaschii (strain ATCC 43067 / DSM 2661 / JAL-1 / JCM 10045 / NBRC 100440) (Methanococcus jannaschii).